We begin with the raw amino-acid sequence, 120 residues long: Large ribosomal subunit protein uL18 (120 aa).

It belongs to the universal ribosomal protein uL18 family. As to quaternary structure, part of the 50S ribosomal subunit; part of the 5S rRNA/L5/L18/L25 subcomplex. Contacts the 5S and 23S rRNAs.

Its function is as follows. This is one of the proteins that bind and probably mediate the attachment of the 5S RNA into the large ribosomal subunit, where it forms part of the central protuberance. In Paramagnetospirillum magneticum (strain ATCC 700264 / AMB-1) (Magnetospirillum magneticum), this protein is Large ribosomal subunit protein uL18.